We begin with the raw amino-acid sequence, 320 residues long: Transaldolase (320 aa).

K126 acts as the Schiff-base intermediate with substrate in catalysis.

The protein belongs to the transaldolase family. Type 1 subfamily. In terms of assembly, homodimer.

The protein resides in the cytoplasm. It catalyses the reaction D-sedoheptulose 7-phosphate + D-glyceraldehyde 3-phosphate = D-erythrose 4-phosphate + beta-D-fructose 6-phosphate. It participates in carbohydrate degradation; pentose phosphate pathway; D-glyceraldehyde 3-phosphate and beta-D-fructose 6-phosphate from D-ribose 5-phosphate and D-xylulose 5-phosphate (non-oxidative stage): step 2/3. In terms of biological role, transaldolase is important for the balance of metabolites in the pentose-phosphate pathway. This is Transaldolase from Bordetella bronchiseptica (strain ATCC BAA-588 / NCTC 13252 / RB50) (Alcaligenes bronchisepticus).